Reading from the N-terminus, the 371-residue chain is Putative glutamate--cysteine ligase 2 (371 aa).

The protein belongs to the glutamate--cysteine ligase type 2 family. YbdK subfamily.

It catalyses the reaction L-cysteine + L-glutamate + ATP = gamma-L-glutamyl-L-cysteine + ADP + phosphate + H(+). In terms of biological role, ATP-dependent carboxylate-amine ligase which exhibits weak glutamate--cysteine ligase activity. This is Putative glutamate--cysteine ligase 2 from Cupriavidus necator (strain ATCC 17699 / DSM 428 / KCTC 22496 / NCIMB 10442 / H16 / Stanier 337) (Ralstonia eutropha).